Consider the following 270-residue polypeptide: Putative phosphoenolpyruvate synthase regulatory protein (270 aa).

An ADP-binding site is contributed by 150–157; that stretch reads GVSRCGKT.

The protein belongs to the pyruvate, phosphate/water dikinase regulatory protein family. PSRP subfamily.

It carries out the reaction [pyruvate, water dikinase] + ADP = [pyruvate, water dikinase]-phosphate + AMP + H(+). It catalyses the reaction [pyruvate, water dikinase]-phosphate + phosphate + H(+) = [pyruvate, water dikinase] + diphosphate. Its function is as follows. Bifunctional serine/threonine kinase and phosphorylase involved in the regulation of the phosphoenolpyruvate synthase (PEPS) by catalyzing its phosphorylation/dephosphorylation. The protein is Putative phosphoenolpyruvate synthase regulatory protein of Shewanella loihica (strain ATCC BAA-1088 / PV-4).